Consider the following 365-residue polypeptide: Eukaryotic translation initiation factor 3 subunit H (365 aa).

One can recognise an MPN domain in the interval 15–166 (ILLDSLVVMK…LRAWRLSTAA (152 aa)).

It belongs to the eIF-3 subunit H family. Component of the eukaryotic translation initiation factor 3 (eIF-3) complex.

It is found in the cytoplasm. Component of the eukaryotic translation initiation factor 3 (eIF-3) complex, which is involved in protein synthesis of a specialized repertoire of mRNAs and, together with other initiation factors, stimulates binding of mRNA and methionyl-tRNAi to the 40S ribosome. The eIF-3 complex specifically targets and initiates translation of a subset of mRNAs involved in cell proliferation. The sequence is that of Eukaryotic translation initiation factor 3 subunit H from Caenorhabditis elegans.